We begin with the raw amino-acid sequence, 423 residues long: Serine hydroxymethyltransferase (423 aa).

(6S)-5,6,7,8-tetrahydrofolate is bound by residues L120 and 124 to 126 (GHL). K229 is subject to N6-(pyridoxal phosphate)lysine. 353 to 355 (SPF) is a (6S)-5,6,7,8-tetrahydrofolate binding site.

This sequence belongs to the SHMT family. Homodimer. Pyridoxal 5'-phosphate is required as a cofactor.

Its subcellular location is the cytoplasm. It catalyses the reaction (6R)-5,10-methylene-5,6,7,8-tetrahydrofolate + glycine + H2O = (6S)-5,6,7,8-tetrahydrofolate + L-serine. It functions in the pathway one-carbon metabolism; tetrahydrofolate interconversion. Its pathway is amino-acid biosynthesis; glycine biosynthesis; glycine from L-serine: step 1/1. Functionally, catalyzes the reversible interconversion of serine and glycine with tetrahydrofolate (THF) serving as the one-carbon carrier. This reaction serves as the major source of one-carbon groups required for the biosynthesis of purines, thymidylate, methionine, and other important biomolecules. Also exhibits THF-independent aldolase activity toward beta-hydroxyamino acids, producing glycine and aldehydes, via a retro-aldol mechanism. This Prochlorococcus marinus (strain MIT 9301) protein is Serine hydroxymethyltransferase.